The following is a 485-amino-acid chain: Aspartyl/glutamyl-tRNA(Asn/Gln) amidotransferase subunit B (485 aa).

It belongs to the GatB/GatE family. GatB subfamily. As to quaternary structure, heterotrimer of A, B and C subunits.

The catalysed reaction is L-glutamyl-tRNA(Gln) + L-glutamine + ATP + H2O = L-glutaminyl-tRNA(Gln) + L-glutamate + ADP + phosphate + H(+). It carries out the reaction L-aspartyl-tRNA(Asn) + L-glutamine + ATP + H2O = L-asparaginyl-tRNA(Asn) + L-glutamate + ADP + phosphate + 2 H(+). In terms of biological role, allows the formation of correctly charged Asn-tRNA(Asn) or Gln-tRNA(Gln) through the transamidation of misacylated Asp-tRNA(Asn) or Glu-tRNA(Gln) in organisms which lack either or both of asparaginyl-tRNA or glutaminyl-tRNA synthetases. The reaction takes place in the presence of glutamine and ATP through an activated phospho-Asp-tRNA(Asn) or phospho-Glu-tRNA(Gln). The polypeptide is Aspartyl/glutamyl-tRNA(Asn/Gln) amidotransferase subunit B (Paramagnetospirillum magneticum (strain ATCC 700264 / AMB-1) (Magnetospirillum magneticum)).